The chain runs to 157 residues: MPRRREVPKREILPDPKFGDVDLAKFMNVIMQGGKKAVAERIIYGALDFIEKKNPGKDPLEAFHMAIGNIKPMVEVKSRRVGGANYQVPVEVRPVRRMALAMRWLKEAAKKRGEKSMSLRLANELMEATEGRGGAMKKRDEVHRMAEANKAFSHFRF.

The protein belongs to the universal ribosomal protein uS7 family. As to quaternary structure, part of the 30S ribosomal subunit. Contacts proteins S9 and S11.

In terms of biological role, one of the primary rRNA binding proteins, it binds directly to 16S rRNA where it nucleates assembly of the head domain of the 30S subunit. Is located at the subunit interface close to the decoding center, probably blocks exit of the E-site tRNA. The sequence is that of Small ribosomal subunit protein uS7 from Polaromonas sp. (strain JS666 / ATCC BAA-500).